We begin with the raw amino-acid sequence, 376 residues long: DNA replication and repair protein RecF (376 aa).

30–37 serves as a coordination point for ATP; it reads GHNGVGKT.

Belongs to the RecF family.

Its subcellular location is the cytoplasm. The RecF protein is involved in DNA metabolism; it is required for DNA replication and normal SOS inducibility. RecF binds preferentially to single-stranded, linear DNA. It also seems to bind ATP. The sequence is that of DNA replication and repair protein RecF from Salinispora arenicola (strain CNS-205).